Consider the following 218-residue polypeptide: Ribose-5-phosphate isomerase A (218 aa).

Substrate contacts are provided by residues 28–31 (TGST), 81–84 (DSAD), and 94–97 (KGKG). Glu-103 functions as the Proton acceptor in the catalytic mechanism. Lys-121 contacts substrate.

It belongs to the ribose 5-phosphate isomerase family. As to quaternary structure, homodimer.

It catalyses the reaction aldehydo-D-ribose 5-phosphate = D-ribulose 5-phosphate. Its pathway is carbohydrate degradation; pentose phosphate pathway; D-ribose 5-phosphate from D-ribulose 5-phosphate (non-oxidative stage): step 1/1. Its function is as follows. Catalyzes the reversible conversion of ribose-5-phosphate to ribulose 5-phosphate. This Blochmanniella pennsylvanica (strain BPEN) protein is Ribose-5-phosphate isomerase A.